Reading from the N-terminus, the 138-residue chain is Integration host factor subunit beta (138 aa).

Residues 81-98 (KAGKELRERVDRSLERQG) show a composition bias toward basic and acidic residues. The segment at 81-138 (KAGKELRERVDRSLERQGDSSSEGEPVSLTAVKAARQAGGHHAAGFPAEATPTLVMSR) is disordered.

Belongs to the bacterial histone-like protein family. In terms of assembly, heterodimer of an alpha and a beta chain.

Its function is as follows. This protein is one of the two subunits of integration host factor, a specific DNA-binding protein that functions in genetic recombination as well as in transcriptional and translational control. In Ralstonia nicotianae (strain ATCC BAA-1114 / GMI1000) (Ralstonia solanacearum), this protein is Integration host factor subunit beta.